Here is a 71-residue protein sequence, read N- to C-terminus: Kunitz-type serine protease inhibitor HNTX-852 (71 aa).

The N-terminal stretch at 1–22 is a signal peptide; sequence DPSGSPHIRILPQETFEDICRL. Disulfide bonds link Cys20/Cys68 and Cys43/Cys64. The 46-residue stretch at 23-68 folds into the BPTI/Kunitz inhibitor domain; that stretch reads PSDSGDCLRFFEMWYFDGTTCTKFVYGGYGGNDNRFPTEKACMKRC.

It belongs to the venom Kunitz-type family. 03 (sub-Kunitz) subfamily. In terms of tissue distribution, expressed by the venom gland.

It localises to the secreted. Functionally, serine protease inhibitor that inhibits trypsin at a molar ratio of 1:1. The polypeptide is Kunitz-type serine protease inhibitor HNTX-852 (Cyriopagopus hainanus (Chinese bird spider)).